The chain runs to 167 residues: Schlafen-like protein (167 aa).

This sequence belongs to the Schlafen family. Subgroup poxviridae B3 subfamily.

The chain is Schlafen-like protein from Bos taurus (Bovine).